The sequence spans 384 residues: Mitogen-activated protein kinase 8 (384 aa).

In terms of domain architecture, Protein kinase spans 26 to 321 (YQNLRPIGSG…VDEALQHPYI (296 aa)). Residues 33 to 38 (GSGAQG) and Lys-55 each bind ATP. Asp-151 serves as the catalytic Proton acceptor. Thr-183 bears the Phosphothreonine mark. The TXY motif lies at 183 to 185 (TPY). Tyr-185 carries the phosphotyrosine modification.

The protein belongs to the protein kinase superfamily. CMGC Ser/Thr protein kinase family. MAP kinase subfamily. Requires Mg(2+) as cofactor. Dually phosphorylated on Thr-183 and Tyr-185, which activates the enzyme.

Its subcellular location is the cytoplasm. The protein localises to the nucleus. The protein resides in the synapse. It carries out the reaction L-seryl-[protein] + ATP = O-phospho-L-seryl-[protein] + ADP + H(+). It catalyses the reaction L-threonyl-[protein] + ATP = O-phospho-L-threonyl-[protein] + ADP + H(+). Its activity is regulated as follows. Activated by threonine and tyrosine phosphorylation. Functionally, responds to activation by environmental stress and pro-inflammatory cytokines by phosphorylating a number of transcription factors, primarily components of AP-1 such as c-Jun and ATF2 and thus regulates AP-1 transcriptional activity. May play a role in the regulation of the circadian clock. In Danio rerio (Zebrafish), this protein is Mitogen-activated protein kinase 8 (mapk8).